A 126-amino-acid polypeptide reads, in one-letter code: UPF0538 protein C2orf76 homolog (126 aa).

This sequence belongs to the UPF0538 family.

The polypeptide is UPF0538 protein C2orf76 homolog (Bos taurus (Bovine)).